A 97-amino-acid polypeptide reads, in one-letter code: Cytochrome c oxidase subunit 4 isoform 1, mitochondrial (97 aa).

A mitochondrion-targeting transit peptide spans 1–22 (MLATRVFNLIGRRAISTSVCVR). Position 29 is an N6-acetyllysine; alternate (Lys-29). Residue Lys-29 is modified to N6-succinyllysine; alternate. Lys-53 carries the post-translational modification N6-acetyllysine. Phosphoserine is present on residues Ser-56 and Ser-58. N6-acetyllysine; alternate is present on Lys-60. Lys-60 is subject to N6-succinyllysine; alternate. N6-acetyllysine is present on Lys-67.

It belongs to the cytochrome c oxidase IV family. As to quaternary structure, component of the cytochrome c oxidase (complex IV, CIV), a multisubunit enzyme composed of 14 subunits. The complex is composed of a catalytic core of 3 subunits MT-CO1, MT-CO2 and MT-CO3, encoded in the mitochondrial DNA, and 11 supernumerary subunits COX4I, COX5A, COX5B, COX6A, COX6B, COX6C, COX7A, COX7B, COX7C, COX8 and NDUFA4, which are encoded in the nuclear genome. The complex exists as a monomer or a dimer and forms supercomplexes (SCs) in the inner mitochondrial membrane with NADH-ubiquinone oxidoreductase (complex I, CI) and ubiquinol-cytochrome c oxidoreductase (cytochrome b-c1 complex, complex III, CIII), resulting in different assemblies (supercomplex SCI(1)III(2)IV(1) and megacomplex MCI(2)III(2)IV(2)). Interacts with PHB2; the interaction decreases in absence of SPHK2. Interacts with AFG1L. Interacts with ABCB7; this interaction allows the regulation of cellular iron homeostasis and cellular reactive oxygen species (ROS) levels in cardiomyocytes. Interacts with FLVCR2; this interaction occurs in the absence of heme and is disrupted upon heme binding. Interacts with IRGC.

Its subcellular location is the mitochondrion inner membrane. It participates in energy metabolism; oxidative phosphorylation. Component of the cytochrome c oxidase, the last enzyme in the mitochondrial electron transport chain which drives oxidative phosphorylation. The respiratory chain contains 3 multisubunit complexes succinate dehydrogenase (complex II, CII), ubiquinol-cytochrome c oxidoreductase (cytochrome b-c1 complex, complex III, CIII) and cytochrome c oxidase (complex IV, CIV), that cooperate to transfer electrons derived from NADH and succinate to molecular oxygen, creating an electrochemical gradient over the inner membrane that drives transmembrane transport and the ATP synthase. Cytochrome c oxidase is the component of the respiratory chain that catalyzes the reduction of oxygen to water. Electrons originating from reduced cytochrome c in the intermembrane space (IMS) are transferred via the dinuclear copper A center (CU(A)) of subunit 2 and heme A of subunit 1 to the active site in subunit 1, a binuclear center (BNC) formed by heme A3 and copper B (CU(B)). The BNC reduces molecular oxygen to 2 water molecules using 4 electrons from cytochrome c in the IMS and 4 protons from the mitochondrial matrix. The protein is Cytochrome c oxidase subunit 4 isoform 1, mitochondrial (COX4I1) of Sus scrofa (Pig).